Here is a 441-residue protein sequence, read N- to C-terminus: DNA primase DnaG (441 aa).

In terms of domain architecture, Toprim spans 165–241 (DTIIIVEGRA…DIDYVARAPP (77 aa)). Positions 171, 215, and 217 each coordinate Mg(2+). Residues 299 to 315 (KEEVAERGEEMESKAEG) are compositionally biased toward basic and acidic residues. The interval 299-320 (KEEVAERGEEMESKAEGAEQPT) is disordered.

The protein belongs to the archaeal DnaG primase family. In terms of assembly, forms a ternary complex with MCM helicase and DNA. Component of the archaeal exosome complex. Requires Mg(2+) as cofactor.

It catalyses the reaction ssDNA + n NTP = ssDNA/pppN(pN)n-1 hybrid + (n-1) diphosphate.. In terms of biological role, RNA polymerase that catalyzes the synthesis of short RNA molecules used as primers for DNA polymerase during DNA replication. Also part of the exosome, which is a complex involved in RNA degradation. Acts as a poly(A)-binding protein that enhances the interaction between heteromeric, adenine-rich transcripts and the exosome. The protein is DNA primase DnaG of Ignicoccus hospitalis (strain KIN4/I / DSM 18386 / JCM 14125).